Here is a 620-residue protein sequence, read N- to C-terminus: Sorbicillinoid biosynthetic cluster transcription factor 1 (620 aa).

Positions 10–37 form a DNA-binding region, zn(2)-C6 fungal-type; it reads CEECRRRKARCDRVRPQCGICADAGRTC. A disordered region spans residues 285 to 308; it reads HDDETSPNENSGSCPSVSPSTTQN. Residues 291–308 show a composition bias toward polar residues; that stretch reads PNENSGSCPSVSPSTTQN.

The protein resides in the nucleus. Transcription factor that acts as the main regulator of the gene cluster that mediates the biosynthesis of sorbicillinoids, a diverse group of yellow secondary metabolites that restrict growth of competing pathogenic fungi but not of bacteria. The polypeptide is Sorbicillinoid biosynthetic cluster transcription factor 1 (Penicillium rubens (strain ATCC 28089 / DSM 1075 / NRRL 1951 / Wisconsin 54-1255) (Penicillium chrysogenum)).